Consider the following 165-residue polypeptide: Aspartate carbamoyltransferase regulatory chain (165 aa).

Zn(2+) is bound by residues cysteine 121, cysteine 126, cysteine 149, and cysteine 152.

Belongs to the PyrI family. Contains catalytic and regulatory chains. Requires Zn(2+) as cofactor.

Involved in allosteric regulation of aspartate carbamoyltransferase. The protein is Aspartate carbamoyltransferase regulatory chain of Methanoregula boonei (strain DSM 21154 / JCM 14090 / 6A8).